The primary structure comprises 506 residues: 2-isopropylmalate synthase (506 aa).

The region spanning 4–266 (ILFMDTTLRD…EPSMTLKEIK (263 aa)) is the Pyruvate carboxyltransferase domain. Mn(2+)-binding residues include Asp13, His201, His203, and Asn237. The tract at residues 390–506 (NITQLQVHFV…KLKSFIQLVK (117 aa)) is regulatory domain.

Belongs to the alpha-IPM synthase/homocitrate synthase family. LeuA type 1 subfamily. Homodimer. It depends on Mn(2+) as a cofactor.

It is found in the cytoplasm. It catalyses the reaction 3-methyl-2-oxobutanoate + acetyl-CoA + H2O = (2S)-2-isopropylmalate + CoA + H(+). The protein operates within amino-acid biosynthesis; L-leucine biosynthesis; L-leucine from 3-methyl-2-oxobutanoate: step 1/4. In terms of biological role, catalyzes the condensation of the acetyl group of acetyl-CoA with 3-methyl-2-oxobutanoate (2-ketoisovalerate) to form 3-carboxy-3-hydroxy-4-methylpentanoate (2-isopropylmalate). This Bacillus cereus (strain ZK / E33L) protein is 2-isopropylmalate synthase.